The chain runs to 1550 residues: DNA excision repair protein ERCC-6-like 2 (1550 aa).

The disordered stretch occupies residues 1 to 23; the sequence is MDPSAPQPRAETSGKDIWHPGER. Basic and acidic residues predominate over residues 12–22; the sequence is TSGKDIWHPGE. Positions 135-321 constitute a Helicase ATP-binding domain; that stretch reads YGHYIHGGGC…WCVMDWAVPG (187 aa). Residue 148–155 coordinates ATP; sequence DDMGLGKT. The DEAH box signature appears at 272–275; that stretch reads DEAH. The Helicase C-terminal domain maps to 512 to 662; the sequence is VLQQLLNHCR…CVVVGSENAK (151 aa). The Atypical PIP-box motif lies at 785 to 796; the sequence is PGQLTLLQCGFS. Disordered regions lie at residues 808 to 848, 914 to 1002, and 1354 to 1410; these read DSDG…TSKH, FPDN…SSLR, and AETK…TRTG. Composition is skewed to basic and acidic residues over residues 830–840 and 933–953; these read EAKDAGCEKNQ and TEHT…DKRN. Residues Ser980 and Ser983 each carry the phosphoserine modification. A compositionally biased stretch (basic residues) spans 992-1002; it reads SRVRKRASSLR. A compositionally biased stretch (polar residues) spans 1359-1388; it reads SPVSSTQEIDSGKNSQASEDTVTSRSLNSE. Ser1373 and Ser1376 each carry phosphoserine. Residues 1389-1405 are compositionally biased toward basic and acidic residues; that stretch reads SETRERRLENTMKDQQD.

This sequence belongs to the SNF2/RAD54 helicase family. Interacts with NEK6. Interacts (via an atypical PIP-box) with PCNA; this interaction facilitates cenrtomeric localization of ERCC6L2. Interacts with CYREN; this interaction is DNA independent. Interacts with XRCC6 and XRCC5. Post-translationally, phosphorylated by NEK6. As to expression, expressed in bone marrow (at protein level).

Its subcellular location is the nucleus. It localises to the cytoplasm. The protein localises to the cytoskeleton. The protein resides in the microtubule organizing center. It is found in the centrosome. Its subcellular location is the mitochondrion. It localises to the chromosome. The protein localises to the centromere. Its function is as follows. Promotes double-strand break (DSB) end-joining and facilitates programmed recombination by controlling how DNA ends are joined in a spatially oriented manner during repair. Also plays a role in DNA repair by restricting DNA end resection in double strand break (DSB) repair. Facilitates replication of complex DNA regions and regulates the maintenance of chromatin structure. This is DNA excision repair protein ERCC-6-like 2 from Homo sapiens (Human).